The sequence spans 195 residues: Large ribosomal subunit protein eL6 (195 aa).

Phosphoserine is present on residues Ser105 and Ser115.

It belongs to the eukaryotic ribosomal protein eL6 family. Component of the large ribosomal subunit (LSU). Mature yeast ribosomes consist of a small (40S) and a large (60S) subunit. The 40S small subunit contains 1 molecule of ribosomal RNA (18S rRNA) and at least 33 different proteins. The large 60S subunit contains 3 rRNA molecules (25S, 5.8S and 5S rRNA) and at least 46 different proteins.

Its subcellular location is the cytoplasm. The protein resides in the nucleus. It localises to the nucleolus. Component of the ribosome, a large ribonucleoprotein complex responsible for the synthesis of proteins in the cell. The small ribosomal subunit (SSU) binds messenger RNAs (mRNAs) and translates the encoded message by selecting cognate aminoacyl-transfer RNA (tRNA) molecules. The large subunit (LSU) contains the ribosomal catalytic site termed the peptidyl transferase center (PTC), which catalyzes the formation of peptide bonds, thereby polymerizing the amino acids delivered by tRNAs into a polypeptide chain. The nascent polypeptides leave the ribosome through a tunnel in the LSU and interact with protein factors that function in enzymatic processing, targeting, and the membrane insertion of nascent chains at the exit of the ribosomal tunnel. The chain is Large ribosomal subunit protein eL6 (rpl6) from Schizosaccharomyces pombe (strain 972 / ATCC 24843) (Fission yeast).